The following is a 159-amino-acid chain: uncharacterized protein (159 aa).

Residues 7 to 151 enclose the N-acetyltransferase domain; the sequence is LLINYKTLEE…NPLIWEPAHI (145 aa).

This is an uncharacterized protein from Bacillus pumilus (strain SAFR-032).